Reading from the N-terminus, the 267-residue chain is 3-oxoadipate enol-lactonase 2 (267 aa).

The catalysed reaction is (4,5-dihydro-5-oxofuran-2-yl)-acetate + H2O = 3-oxoadipate + H(+). It participates in aromatic compound metabolism; beta-ketoadipate pathway; 3-oxoadipate from 5-oxo-4,5-dihydro-2-furylacetate: step 1/1. The sequence is that of 3-oxoadipate enol-lactonase 2 (catD) from Acinetobacter baylyi (strain ATCC 33305 / BD413 / ADP1).